We begin with the raw amino-acid sequence, 321 residues long: Protein-L-histidine N-pros-methyltransferase (321 aa).

Residues 1 to 24 (MRLWLCWLGCYTLLLWALRRRMWA) form the signal peptide. N-linked (GlcNAc...) asparagine glycosylation occurs at asparagine 89. S-adenosyl-L-homocysteine-binding residues include glutamate 177, asparagine 213, and tyrosine 298.

Belongs to the METTL9 family.

It localises to the endoplasmic reticulum. The protein localises to the mitochondrion. It carries out the reaction L-histidyl-[protein] + S-adenosyl-L-methionine = N(pros)-methyl-L-histidyl-[protein] + S-adenosyl-L-homocysteine + H(+). Protein-histidine N-methyltransferase that specifically catalyzes 1-methylhistidine (pros-methylhistidine) methylation of target proteins. Mediates methylation of proteins with a His-x-His (HxH) motif (where 'x' is preferably a small amino acid); 1-methylhistidine modification may affect the binding of zinc and other metals to its target proteins. The sequence is that of Protein-L-histidine N-pros-methyltransferase from Gallus gallus (Chicken).